Consider the following 95-residue polypeptide: MAWARDEGGAAVLEILVQPRASRTRAVGEHDGRLKIQLAAPPVDGAANAALVEFLAAALGVRRADVELLRGETGRRKTVRVAGITAAAAVAALAS.

The protein belongs to the UPF0235 family.

The protein is UPF0235 protein A2cp1_1215 of Anaeromyxobacter dehalogenans (strain 2CP-1 / ATCC BAA-258).